The primary structure comprises 86 residues: MHAYVYKSQRKQDTFVYLATRDDFSGLPAAVQAQLAPLTFVLDVALTPERRLAQADAATVREALGKHGFYLQLPKTIVLAGECDHD.

The YcgL domain occupies 1–83 (MHAYVYKSQR…PKTIVLAGEC (83 aa)).

The sequence is that of YcgL domain-containing protein XCV4171 from Xanthomonas euvesicatoria pv. vesicatoria (strain 85-10) (Xanthomonas campestris pv. vesicatoria).